The chain runs to 28 residues: Arylalkyl acylamidase (28 aa).

In terms of assembly, homotetramer.

The catalysed reaction is an N-acetylarylalkylamine + H2O = an aralkylamine + acetate. With respect to regulation, activated by divalent metal ions. Inhibited by certain thiol reagents. In terms of biological role, shows a strict specificity for N-acetyl arylalkylamines but not acetanilide derivatives. This chain is Arylalkyl acylamidase, found in Pseudomonas putida (Arthrobacter siderocapsulatus).